The following is a 29-amino-acid chain: GEYCGESCYLIPCFTPGCYCVSRQCVNKN.

The segment at residues 1-29 is a cross-link (cyclopeptide (Gly-Asn)); the sequence is GEYCGESCYLIPCFTPGCYCVSRQCVNKN. Intrachain disulfides connect Cys-4/Cys-18, Cys-8/Cys-20, and Cys-13/Cys-25.

This is a cyclic peptide.

Its function is as follows. Probably participates in a plant defense mechanism. Has no activity against bacteria up to a concentration of 80 uM. Has cytotoxic but no hemolytic activity. The polypeptide is Chassatide C10 (Chassalia chartacea (Chassalia curviflora)).